Here is a 472-residue protein sequence, read N- to C-terminus: Trigger factor (472 aa).

One can recognise a PPIase FKBP-type domain in the interval 174–261; it reads GDIALVSFKG…LEDLKIKELP (88 aa). The segment at 438–472 is disordered; that stretch reads EKTPEKARDQIKEKSSKKKTTKTNKEKKSSKTPKS. Residues 439-451 are compositionally biased toward basic and acidic residues; it reads KTPEKARDQIKEK.

This sequence belongs to the FKBP-type PPIase family. Tig subfamily.

The protein localises to the cytoplasm. The enzyme catalyses [protein]-peptidylproline (omega=180) = [protein]-peptidylproline (omega=0). Its function is as follows. Involved in protein export. Acts as a chaperone by maintaining the newly synthesized protein in an open conformation. Functions as a peptidyl-prolyl cis-trans isomerase. The protein is Trigger factor of Prochlorococcus marinus (strain NATL2A).